Consider the following 360-residue polypeptide: Photosystem II protein D1 3 (360 aa).

A run of 3 helical transmembrane segments spans residues 29–46 (YVGWFGVLLIPTALTAAI), 118–133 (HFLIAIYAYMGRQWEL), and 142–156 (WIPVAFSAPVAAATA). A chlorophyll a-binding site is contributed by His118. Pheophytin a is bound at residue Tyr126. 2 residues coordinate [CaMn4O5] cluster: Asp170 and Glu189. The chain crosses the membrane as a helical span at residues 197–218 (FHMIGVAGVFGGALFSAMHGSL). A chlorophyll a-binding site is contributed by His198. Residues His215 and 264-265 (SF) contribute to the a quinone site. Residue His215 participates in Fe cation binding. His272 contacts Fe cation. The chain crosses the membrane as a helical span at residues 274-288 (FLAAWPVIGIWFAAL). 4 residues coordinate [CaMn4O5] cluster: His332, Glu333, Asp342, and Ala344. The propeptide occupies 345-360 (SGEVQPIALTAPAIAS).

This sequence belongs to the reaction center PufL/M/PsbA/D family. As to quaternary structure, PSII is composed of 1 copy each of membrane proteins PsbA, PsbB, PsbC, PsbD, PsbE, PsbF, PsbH, PsbI, PsbJ, PsbK, PsbL, PsbM, PsbT, PsbX, PsbY, PsbZ, Psb30/Ycf12, peripheral proteins PsbO, CyanoQ (PsbQ), PsbU, PsbV and a large number of cofactors. It forms dimeric complexes. The D1/D2 heterodimer binds P680, chlorophylls that are the primary electron donor of PSII, and subsequent electron acceptors. It shares a non-heme iron and each subunit binds pheophytin, quinone, additional chlorophylls, carotenoids and lipids. D1 provides most of the ligands for the Mn4-Ca-O5 cluster of the oxygen-evolving complex (OEC). There is also a Cl(-1) ion associated with D1 and D2, which is required for oxygen evolution. The PSII complex binds additional chlorophylls, carotenoids and specific lipids. serves as cofactor. Post-translationally, tyr-161 forms a radical intermediate that is referred to as redox-active TyrZ, YZ or Y-Z. In terms of processing, C-terminally processed by CtpA; processing is essential to allow assembly of the oxygen-evolving complex and thus photosynthetic growth.

It localises to the cellular thylakoid membrane. It carries out the reaction 2 a plastoquinone + 4 hnu + 2 H2O = 2 a plastoquinol + O2. Photosystem II (PSII) is a light-driven water:plastoquinone oxidoreductase that uses light energy to abstract electrons from H(2)O, generating O(2) and a proton gradient subsequently used for ATP formation. It consists of a core antenna complex that captures photons, and an electron transfer chain that converts photonic excitation into a charge separation. The D1/D2 (PsbA/PsbD) reaction center heterodimer binds P680, the primary electron donor of PSII as well as several subsequent electron acceptors. The polypeptide is Photosystem II protein D1 3 (Nostoc sp. (strain PCC 7120 / SAG 25.82 / UTEX 2576)).